A 72-amino-acid chain; its full sequence is Mu-like prophage FluMu protein C (72 aa).

The segment at residues 35 to 55 (NVPDLIKKYRLSESTIYAILR) is a DNA-binding region (H-T-H motif).

It belongs to the c/mor transcriptional regulatory family.

Functionally, required for transcription of the phage late genes. This Haemophilus influenzae (strain ATCC 51907 / DSM 11121 / KW20 / Rd) protein is Mu-like prophage FluMu protein C.